We begin with the raw amino-acid sequence, 507 residues long: Histidine ammonia-lyase (507 aa).

Positions Ala140–Gly142 form a cross-link, 5-imidazolinone (Ala-Gly). Ser141 carries the 2,3-didehydroalanine (Ser) modification.

It belongs to the PAL/histidase family. Post-translationally, contains an active site 4-methylidene-imidazol-5-one (MIO), which is formed autocatalytically by cyclization and dehydration of residues Ala-Ser-Gly.

It is found in the cytoplasm. It carries out the reaction L-histidine = trans-urocanate + NH4(+). It functions in the pathway amino-acid degradation; L-histidine degradation into L-glutamate; N-formimidoyl-L-glutamate from L-histidine: step 1/3. The chain is Histidine ammonia-lyase from Yersinia enterocolitica serotype O:8 / biotype 1B (strain NCTC 13174 / 8081).